A 170-amino-acid polypeptide reads, in one-letter code: Anaphase-promoting complex subunit SWM1 (170 aa).

Basic and acidic residues-rich tracts occupy residues 48–67 (NTRTDAEEGRAPQDGERNSN) and 132–141 (GANEPRKETI). Disordered stretches follow at residues 48–81 (NTRTDAEEGRAPQDGERNSNVRESAQGKALMTSE) and 122–141 (LNGGTNSRNDGANEPRKETI).

This sequence belongs to the APC13 family. As to quaternary structure, the APC/C is composed of at least 13 subunits that stay tightly associated throughout the cell cycle: APC1, APC2, APC4, APC5, APC9, APC11, CDC16, CDC23, CDC26, CDC27, DOC1, MND2 and SWM1. SWM1 interacts directly with CDC23 and APC5, and is required to tether APC9, CDC16, CDC26 and CDC27 to the complex.

It participates in protein modification; protein ubiquitination. Component of the anaphase promoting complex/cyclosome (APC/C), a cell cycle-regulated E3 ubiquitin-protein ligase complex that controls progression through mitosis and the G1 phase of the cell cycle. The APC/C is thought to confer substrate specificity and, in the presence of ubiquitin-conjugating E2 enzymes, it catalyzes the formation of protein-ubiquitin conjugates that are subsequently degraded by the 26S proteasome. In early mitosis, the APC/C is activated by CDC20 and targets securin PDS1, the B-type cyclin CLB5, and other anaphase inhibitory proteins for proteolysis, thereby triggering the separation of sister chromatids at the metaphase-to-anaphase transition. In late mitosis and in G1, degradation of CLB5 allows activation of the APC/C by CDH1, which is needed to destroy CDC20 and the B-type cyclin CLB2 to allow exit from mitosis and creating the low CDK state necessary for cytokinesis and for reforming prereplicative complexes in G1 prior to another round of replication. SWM1 is required for APC/C activity in meiosis. In Saccharomyces cerevisiae (strain ATCC 204508 / S288c) (Baker's yeast), this protein is Anaphase-promoting complex subunit SWM1 (SWM1).